A 201-amino-acid polypeptide reads, in one-letter code: MIAYLSGVVREVREGSAVVVAGGVGYEVQCPAGMLARLKPGEAAEFSTRFIVREDAQLLFGFPDADHLKLFDLLTSVSGVGPKLGLALLSAMPVSALAAGLIGGDVKLLSSVSGVGKKTAERLALELSSKVPEHLAAAASGAAGGKRPARVSSTAGHDAVDALLALGFREAQVRAAVAELLGADPEASADTLIRKALGRLR.

The tract at residues 1-63 (MIAYLSGVVR…EDAQLLFGFP (63 aa)) is domain I. The domain II stretch occupies residues 64 to 142 (DADHLKLFDL…EHLAAAASGA (79 aa)). The segment at 143–150 (AGGKRPAR) is flexible linker. The interval 151–201 (VSSTAGHDAVDALLALGFREAQVRAAVAELLGADPEASADTLIRKALGRLR) is domain III.

The protein belongs to the RuvA family. In terms of assembly, homotetramer. Forms an RuvA(8)-RuvB(12)-Holliday junction (HJ) complex. HJ DNA is sandwiched between 2 RuvA tetramers; dsDNA enters through RuvA and exits via RuvB. An RuvB hexamer assembles on each DNA strand where it exits the tetramer. Each RuvB hexamer is contacted by two RuvA subunits (via domain III) on 2 adjacent RuvB subunits; this complex drives branch migration. In the full resolvosome a probable DNA-RuvA(4)-RuvB(12)-RuvC(2) complex forms which resolves the HJ.

The protein resides in the cytoplasm. Its function is as follows. The RuvA-RuvB-RuvC complex processes Holliday junction (HJ) DNA during genetic recombination and DNA repair, while the RuvA-RuvB complex plays an important role in the rescue of blocked DNA replication forks via replication fork reversal (RFR). RuvA specifically binds to HJ cruciform DNA, conferring on it an open structure. The RuvB hexamer acts as an ATP-dependent pump, pulling dsDNA into and through the RuvAB complex. HJ branch migration allows RuvC to scan DNA until it finds its consensus sequence, where it cleaves and resolves the cruciform DNA. The protein is Holliday junction branch migration complex subunit RuvA of Deinococcus radiodurans (strain ATCC 13939 / DSM 20539 / JCM 16871 / CCUG 27074 / LMG 4051 / NBRC 15346 / NCIMB 9279 / VKM B-1422 / R1).